Here is a 218-residue protein sequence, read N- to C-terminus: Ribonuclease T (218 aa).

The Exonuclease domain occupies Val24–Phe198. Mg(2+) contacts are provided by Asp27, Glu29, His185, and Asp190. Residue His185 is the Proton donor/acceptor of the active site.

It belongs to the RNase T family. As to quaternary structure, homodimer. Requires Mg(2+) as cofactor.

Functionally, trims short 3' overhangs of a variety of RNA species, leaving a one or two nucleotide 3' overhang. Responsible for the end-turnover of tRNA: specifically removes the terminal AMP residue from uncharged tRNA (tRNA-C-C-A). Also appears to be involved in tRNA biosynthesis. This chain is Ribonuclease T, found in Histophilus somni (strain 129Pt) (Haemophilus somnus).